Here is a 406-residue protein sequence, read N- to C-terminus: Argininosuccinate synthase (406 aa).

Residues 10–18 (AYSGGLDTS) and A37 each bind ATP. L-citrulline is bound by residues Y88 and S93. An ATP-binding site is contributed by G118. The L-aspartate site is built by T120, N124, and D125. N124 contacts L-citrulline. R128, S179, S188, E264, and Y276 together coordinate L-citrulline.

This sequence belongs to the argininosuccinate synthase family. Type 1 subfamily. As to quaternary structure, homotetramer.

It localises to the cytoplasm. It catalyses the reaction L-citrulline + L-aspartate + ATP = 2-(N(omega)-L-arginino)succinate + AMP + diphosphate + H(+). The protein operates within amino-acid biosynthesis; L-arginine biosynthesis; L-arginine from L-ornithine and carbamoyl phosphate: step 2/3. The sequence is that of Argininosuccinate synthase from Azotobacter vinelandii (strain DJ / ATCC BAA-1303).